Consider the following 318-residue polypeptide: Dual specificity protein phosphatase 2 (318 aa).

Residues 27–148 form the Rhodanese domain; the sequence is EAERTLLLDC…FQTYCPDLCS (122 aa). Residues 176-317 enclose the Tyrosine-protein phosphatase domain; that stretch reads GPVEILPYLY…LLQLETQVLC (142 aa). Cys-261 acts as the Phosphocysteine intermediate in catalysis.

Belongs to the protein-tyrosine phosphatase family. Non-receptor class dual specificity subfamily. In terms of assembly, interacts with MAPK14; this interaction does not lead to catalytic activation of DUSP2 and dephosphrylation of MAPK14. As to expression, in hematopoietic tissues such as spleen and thymus.

The protein resides in the nucleus. The enzyme catalyses O-phospho-L-tyrosyl-[protein] + H2O = L-tyrosyl-[protein] + phosphate. It catalyses the reaction O-phospho-L-threonyl-[protein] + H2O = L-threonyl-[protein] + phosphate. Dephosphorylates both phosphorylated Thr and Tyr residues in MAPK1, and dephosphorylation of phosphotyrosine is slightly faster than that of phosphothreonine. Can dephosphorylate MAPK1. The chain is Dual specificity protein phosphatase 2 from Mus musculus (Mouse).